Consider the following 518-residue polypeptide: Membrane-bound lytic murein transglycosylase F (518 aa).

An N-terminal signal peptide occupies residues 1–21 (MKKLKINYLFIGILALLLAVA). The tract at residues 22–269 (LWPSIPWFGK…RIEEKYLGHG (248 aa)) is non-LT domain. The interval 270–518 (DDFDYVDTRT…SRKGSEEKQN (249 aa)) is LT domain. Glu-314 is a catalytic residue.

The protein in the N-terminal section; belongs to the bacterial solute-binding protein 3 family. It in the C-terminal section; belongs to the transglycosylase Slt family.

The protein localises to the cell outer membrane. The catalysed reaction is Exolytic cleavage of the (1-&gt;4)-beta-glycosidic linkage between N-acetylmuramic acid (MurNAc) and N-acetylglucosamine (GlcNAc) residues in peptidoglycan, from either the reducing or the non-reducing ends of the peptidoglycan chains, with concomitant formation of a 1,6-anhydrobond in the MurNAc residue.. Murein-degrading enzyme that degrades murein glycan strands and insoluble, high-molecular weight murein sacculi, with the concomitant formation of a 1,6-anhydromuramoyl product. Lytic transglycosylases (LTs) play an integral role in the metabolism of the peptidoglycan (PG) sacculus. Their lytic action creates space within the PG sacculus to allow for its expansion as well as for the insertion of various structures such as secretion systems and flagella. The polypeptide is Membrane-bound lytic murein transglycosylase F (Escherichia coli (strain ATCC 8739 / DSM 1576 / NBRC 3972 / NCIMB 8545 / WDCM 00012 / Crooks)).